Here is a 126-residue protein sequence, read N- to C-terminus: Holo-[acyl-carrier-protein] synthase (126 aa).

Residues Asp-8 and Glu-57 each coordinate Mg(2+).

This sequence belongs to the P-Pant transferase superfamily. AcpS family. The cofactor is Mg(2+).

The protein resides in the cytoplasm. The catalysed reaction is apo-[ACP] + CoA = holo-[ACP] + adenosine 3',5'-bisphosphate + H(+). Transfers the 4'-phosphopantetheine moiety from coenzyme A to a Ser of acyl-carrier-protein. In Geobacter metallireducens (strain ATCC 53774 / DSM 7210 / GS-15), this protein is Holo-[acyl-carrier-protein] synthase.